A 195-amino-acid polypeptide reads, in one-letter code: Putative Tricorn-like protease N-terminal subunit (195 aa).

It belongs to the peptidase S41B family.

It localises to the cytoplasm. Degrades oligopeptides in a sequential manner. The polypeptide is Putative Tricorn-like protease N-terminal subunit (triN) (Sulfurisphaera tokodaii (strain DSM 16993 / JCM 10545 / NBRC 100140 / 7) (Sulfolobus tokodaii)).